The following is a 510-amino-acid chain: Putative serine protease K12H4.7 (510 aa).

The first 19 residues, 1-19, serve as a signal peptide directing secretion; the sequence is MKTLLAVLLAACVLTQVLS. The Charge relay system role is filled by S187. The N-linked (GlcNAc...) asparagine glycan is linked to N234. D452 (charge relay system) is an active-site residue. N-linked (GlcNAc...) asparagine glycosylation is present at N473. H477 (charge relay system) is an active-site residue.

The protein belongs to the peptidase S28 family.

This chain is Putative serine protease K12H4.7, found in Caenorhabditis elegans.